A 197-amino-acid chain; its full sequence is Segregation and condensation protein B (197 aa).

It belongs to the ScpB family. Homodimer. Homodimerization may be required to stabilize the binding of ScpA to the Smc head domains. Component of a cohesin-like complex composed of ScpA, ScpB and the Smc homodimer, in which ScpA and ScpB bind to the head domain of Smc. The presence of the three proteins is required for the association of the complex with DNA.

Its subcellular location is the cytoplasm. Participates in chromosomal partition during cell division. May act via the formation of a condensin-like complex containing Smc and ScpA that pull DNA away from mid-cell into both cell halves. This is Segregation and condensation protein B from Bacillus licheniformis (strain ATCC 14580 / DSM 13 / JCM 2505 / CCUG 7422 / NBRC 12200 / NCIMB 9375 / NCTC 10341 / NRRL NRS-1264 / Gibson 46).